A 542-amino-acid polypeptide reads, in one-letter code: CTP synthase (542 aa).

The amidoligase domain stretch occupies residues 1–269 (MQTKYIFITG…DALICELLHL (269 aa)). Ser14 serves as a coordination point for CTP. Residue Ser14 coordinates UTP. ATP contacts are provided by residues 15–20 (SLGKGL) and Asp72. The Mg(2+) site is built by Asp72 and Glu143. Residues 150–152 (DIE), 189–194 (KTKPSQ), and Lys225 contribute to the CTP site. Residues 189 to 194 (KTKPSQ) and Lys225 contribute to the UTP site. 241–243 (KDV) serves as a coordination point for ATP. Positions 301 to 538 (YVQHQDAYKS…IQAMIIYHKS (238 aa)) constitute a Glutamine amidotransferase type-1 domain. Gly358 contacts L-glutamine. Cys385 functions as the Nucleophile; for glutamine hydrolysis in the catalytic mechanism. L-glutamine contacts are provided by residues 386–389 (LGMQ), Glu409, and Arg466. Active-site residues include His511 and Glu513.

Belongs to the CTP synthase family. As to quaternary structure, homotetramer.

The catalysed reaction is UTP + L-glutamine + ATP + H2O = CTP + L-glutamate + ADP + phosphate + 2 H(+). It carries out the reaction L-glutamine + H2O = L-glutamate + NH4(+). The enzyme catalyses UTP + NH4(+) + ATP = CTP + ADP + phosphate + 2 H(+). It participates in pyrimidine metabolism; CTP biosynthesis via de novo pathway; CTP from UDP: step 2/2. Its activity is regulated as follows. Allosterically activated by GTP, when glutamine is the substrate; GTP has no effect on the reaction when ammonia is the substrate. The allosteric effector GTP functions by stabilizing the protein conformation that binds the tetrahedral intermediate(s) formed during glutamine hydrolysis. Inhibited by the product CTP, via allosteric rather than competitive inhibition. In terms of biological role, catalyzes the ATP-dependent amination of UTP to CTP with either L-glutamine or ammonia as the source of nitrogen. Regulates intracellular CTP levels through interactions with the four ribonucleotide triphosphates. The polypeptide is CTP synthase (Protochlamydia amoebophila (strain UWE25)).